The primary structure comprises 251 residues: Imidazole glycerol phosphate synthase subunit HisF (251 aa).

Residues Asp11 and Asp130 contribute to the active site.

The protein belongs to the HisA/HisF family. As to quaternary structure, heterodimer of HisH and HisF.

The protein resides in the cytoplasm. The enzyme catalyses 5-[(5-phospho-1-deoxy-D-ribulos-1-ylimino)methylamino]-1-(5-phospho-beta-D-ribosyl)imidazole-4-carboxamide + L-glutamine = D-erythro-1-(imidazol-4-yl)glycerol 3-phosphate + 5-amino-1-(5-phospho-beta-D-ribosyl)imidazole-4-carboxamide + L-glutamate + H(+). Its pathway is amino-acid biosynthesis; L-histidine biosynthesis; L-histidine from 5-phospho-alpha-D-ribose 1-diphosphate: step 5/9. Its function is as follows. IGPS catalyzes the conversion of PRFAR and glutamine to IGP, AICAR and glutamate. The HisF subunit catalyzes the cyclization activity that produces IGP and AICAR from PRFAR using the ammonia provided by the HisH subunit. This is Imidazole glycerol phosphate synthase subunit HisF from Flavobacterium johnsoniae (strain ATCC 17061 / DSM 2064 / JCM 8514 / BCRC 14874 / CCUG 350202 / NBRC 14942 / NCIMB 11054 / UW101) (Cytophaga johnsonae).